The sequence spans 246 residues: Dihydroorotate dehydrogenase B (NAD(+)), electron transfer subunit (246 aa).

In terms of domain architecture, FAD-binding FR-type spans 3-95 (MEYFKGKVKE…IGPLGNGFDI (93 aa)). Residues 48 to 51 (RPIS) and 70 to 71 (GT) each bind FAD. [2Fe-2S] cluster-binding residues include C213, C218, C221, and C233.

Belongs to the PyrK family. In terms of assembly, heterotetramer of 2 PyrK and 2 PyrD type B subunits. The cofactor is [2Fe-2S] cluster. FAD serves as cofactor.

The protein operates within pyrimidine metabolism; UMP biosynthesis via de novo pathway; orotate from (S)-dihydroorotate (NAD(+) route): step 1/1. Its function is as follows. Responsible for channeling the electrons from the oxidation of dihydroorotate from the FMN redox center in the PyrD type B subunit to the ultimate electron acceptor NAD(+). This Clostridium perfringens (strain 13 / Type A) protein is Dihydroorotate dehydrogenase B (NAD(+)), electron transfer subunit.